A 150-amino-acid polypeptide reads, in one-letter code: Arginine repressor (150 aa).

It belongs to the ArgR family.

It localises to the cytoplasm. It participates in amino-acid biosynthesis; L-arginine biosynthesis [regulation]. Functionally, regulates arginine biosynthesis genes. The polypeptide is Arginine repressor (Clostridium beijerinckii (strain ATCC 51743 / NCIMB 8052) (Clostridium acetobutylicum)).